The primary structure comprises 441 residues: MTNFCIKSYLFLYLSFLLFFDIITIFHVSSIRISTVLKNDKKKKNFNTSLVEENKKYLFNEIKLNNRFKNDIKGYIQNINNFHSIIESKIPNSLLYVHEDLINFHNSQFIGDIEIGNPPQSFKVVFDTGSSNFAIPSTKCVKGGCTLHNKFDAKKSRTFMSNLKNKKESIYTYVQYGTGKSILEHGYDDVYMKGLKINKQCIGLIIEESMHPFSDLPFDGIVGLGFSDPDNSFQTKYSKSLIETIKEQNLLQQNIFSFYVPKELEKSGAITFGRANSKYAIEGEKIEWFPVISMYFWEINLLGILLPDKNFEICSNKKCRAAVDTGSSLITGPSSLMQPLIENINLEKDCSNISSLPIISFVLKNVEGKTVILDFTPDDYILQENSEEDNSSQCVIGLMSLDIPPPRGPIFIFGNVFIRKYYTIFDNDHKLVGVVKSNHNF.

Topologically, residues 1-7 (MTNFCIK) are cytoplasmic. Residues 8 to 28 (SYLFLYLSFLLFFDIITIFHV) traverse the membrane as a helical; Signal-anchor for type II membrane protein segment. At 29 to 441 (SSIRISTVLK…VGVVKSNHNF (413 aa)) the chain is on the extracellular side. The 327-residue stretch at 109-435 (FIGDIEIGNP…DNDHKLVGVV (327 aa)) folds into the Peptidase A1 domain. Active-site residues include D127 and D324.

The protein belongs to the peptidase A1 family.

The protein resides in the membrane. During the development in the mosquito midgut, plays a role in sporozoite egress from oocysts. The polypeptide is Plasmepsin VI (Plasmodium berghei (strain Anka)).